The sequence spans 1461 residues: Phospholipid-transporting ATPase VB (1461 aa).

At 1 to 82 (MALSVDSSWH…TTKYTLFTFL (82 aa)) the chain is on the cytoplasmic side. A helical transmembrane segment spans residues 83-104 (PRNLFEQFHRWANLYFLFLVIL). Over 105-110 (NWMPSM) the chain is Exoplasmic loop. A helical membrane pass occupies residues 111 to 132 (EVFHREITMLPLAIVLFVIMIK). The Cytoplasmic portion of the chain corresponds to 133-316 (DGMEDFKRHR…SKIERRMNID (184 aa)). The helical transmembrane segment at 317–338 (IFFCIGILILMCLIGAVGHSIW) threads the bilayer. Over 339–368 (NGTFEEHPPFDVPDANGSFLPSALGGFYMF) the chain is Exoplasmic loop. Residues 369–390 (LTMIILLQVLIPISLYVSIELV) form a helical membrane-spanning segment. The Cytoplasmic portion of the chain corresponds to 391-1111 (KLGQVFFLSN…GHWCYSRLAR (721 aa)). Asp-433 acts as the 4-aspartylphosphate intermediate in catalysis. ATP contacts are provided by Asp-433, Lys-434, and Thr-435. Asp-433 is a Mg(2+) binding site. Thr-435 lines the Mg(2+) pocket. Polar residues-rich tracts occupy residues 496–511 (MRSQ…SQSA) and 530–539 (SQPPVAFSSS). Disordered stretches follow at residues 496–541 (MRSQ…SSIE) and 640–687 (TAPS…MWDQ). 9 residues coordinate ATP: Glu-724, Phe-766, Lys-790, Arg-835, Thr-915, Gly-916, Asp-917, Arg-1029, and Lys-1035. A Mg(2+)-binding site is contributed by Asp-1055. ATP contacts are provided by Asn-1058 and Asp-1059. Asp-1059 contributes to the Mg(2+) binding site. The chain crosses the membrane as a helical span at residues 1112 to 1132 (MVVYYLYKNVCYVNLLFWYQF). Topologically, residues 1133–1144 (FCGFSSSTMIDY) are exoplasmic loop. The chain crosses the membrane as a helical span at residues 1145–1164 (WQMIFFNLFFTSLPPLVFGV). Residues 1165-1194 (LDKDISAETLLALPELYKSGQNSECYNLST) lie on the Cytoplasmic side of the membrane. Residues 1195-1216 (FWISMVDAFYQSLICFFIPYLA) traverse the membrane as a helical segment. Over 1217–1223 (YKGSDID) the chain is Exoplasmic loop. Residues 1224–1246 (VFTFGTPINTISLTTILLHQAME) traverse the membrane as a helical segment. Residues 1247–1252 (MKTWTI) are Cytoplasmic-facing. Residues 1253–1273 (FHGVVLLGSFLMYFLVSLLYN) form a helical membrane-spanning segment. Residues 1274–1291 (ATCVICNSPTNPYWVMEG) lie on the Exoplasmic loop side of the membrane. Residues 1292–1316 (QLSNPTFYLVCFLTPVVALLPRYFF) traverse the membrane as a helical segment. Over 1317-1461 (LSLQGTCGKS…HRRSQSSLTI (145 aa)) the chain is Cytoplasmic. A disordered region spans residues 1346–1397 (IQSWRSRQRPAPVPEVARPTHHPVSSITGQDFSASTPKSSNPPKRKHVEESV). Residues 1368-1387 (PVSSITGQDFSASTPKSSNP) show a composition bias toward polar residues.

Belongs to the cation transport ATPase (P-type) (TC 3.A.3) family. Type IV subfamily. Component of a P4-ATPase flippase complex which consists of a catalytic alpha subunit ATP10B and an accessory beta subunit TMEM30A. The cofactor is Mg(2+). Autophosphorylated at the conserved aspartate of the P-type ATPase signature sequence. As to expression, expressed in predominantly in brain structures including medulla oblongata, substantia nigra and basal ganglia. Expressed in the gastrointestinal system with highest levels in the small intestine and colon. Also expressed at low levels in testis and thymus.

The protein localises to the late endosome membrane. It is found in the lysosome membrane. The protein resides in the endoplasmic reticulum membrane. It carries out the reaction ATP + H2O + phospholipidSide 1 = ADP + phosphate + phospholipidSide 2.. The enzyme catalyses a beta-D-glucosyl-(1&lt;-&gt;1')-N-acylsphing-4-enine(out) + ATP + H2O = a beta-D-glucosyl-(1&lt;-&gt;1')-N-acylsphing-4-enine(in) + ADP + phosphate + H(+). Catalytic component of a P4-ATPase flippase complex, which catalyzes the hydrolysis of ATP coupled to the transport of glucosylceramide (GlcCer) from the outer to the inner leaflet of lysosome membranes. Plays an important role in the maintenance of lysosome membrane integrity and function in cortical neurons. The protein is Phospholipid-transporting ATPase VB of Homo sapiens (Human).